Here is a 113-residue protein sequence, read N- to C-terminus: uncharacterized protein (113 aa).

This is an uncharacterized protein from Escherichia coli O6:H1 (strain CFT073 / ATCC 700928 / UPEC).